The sequence spans 1044 residues: Translation initiation factor IF-2 (1044 aa).

Residues 55–458 (EAQEGQGAGK…KRKASAQERR (404 aa)) are disordered. The span at 57–77 (QEGQGAGKSAAKSAKPAAQPK) shows a compositional bias: low complexity. The segment covering 104 to 146 (LSEKRERRPLTERRPLAERRPLAERPLVDRPVTERPLAERPAA) has biased composition (basic and acidic residues). Composition is skewed to low complexity over residues 147 to 168 (ELRPGAAKAAAPARPAAEAQPV), 190 to 231 (KAQP…QKPA), and 254 to 265 (ASSRPASAAPAA). A compositionally biased stretch (basic and acidic residues) spans 267–281 (GEKRPAAAAERREEP). Low complexity-rich tracts occupy residues 352-375 (AAGQGTAARAGGLGLPQKPKAGAP) and 383-395 (APQRPGRRGAPLA). The segment covering 399 to 444 (LDPKVAEQAKAGEGKPRYGQSGDKRRADLYDRREHPSSQPSEEKLF) has biased composition (basic and acidic residues). One can recognise a tr-type G domain in the interval 546 to 714 (PRHPVVTIMG…ILVLAEVSDL (169 aa)). Residues 555–562 (GHVDHGKT) are G1. GTP is bound at residue 555–562 (GHVDHGKT). Positions 580-584 (GITQH) are G2. Residues 601–604 (DTPG) form a G3 region. Residues 601-605 (DTPGH) and 655-658 (NKID) contribute to the GTP site. The tract at residues 655 to 658 (NKID) is G4. A G5 region spans residues 691–693 (SAK).

This sequence belongs to the TRAFAC class translation factor GTPase superfamily. Classic translation factor GTPase family. IF-2 subfamily.

Its subcellular location is the cytoplasm. One of the essential components for the initiation of protein synthesis. Protects formylmethionyl-tRNA from spontaneous hydrolysis and promotes its binding to the 30S ribosomal subunits. Also involved in the hydrolysis of GTP during the formation of the 70S ribosomal complex. This Symbiobacterium thermophilum (strain DSM 24528 / JCM 14929 / IAM 14863 / T) protein is Translation initiation factor IF-2.